The chain runs to 1072 residues: Netrin receptor unc-5 (1072 aa).

A signal peptide spans 1–30 (MAVINKAGNVIALLLVKLQLILLFTLSVSG). At 31 to 440 (ELPQLDYGSL…SSEAEEAGDL (410 aa)) the chain is on the extracellular side. The disordered stretch occupies residues 77 to 100 (LGNSSEDENVRPQQGSSSSGLGSS). Residue N79 is glycosylated (N-linked (GlcNAc...) asparagine). The region spanning 128–224 (PIFLIEPESV…RGVVKSQAAT (97 aa)) is the Ig-like domain. Intrachain disulfides connect C149/C207, C253/C303, C336/C375, C338/C378, and C352/C364. An Ig-like C2-type domain is found at 232–314 (KSFNQSPTSL…AENIAGRRVS (83 aa)). N300 is a glycosylation site (N-linked (GlcNAc...) asparagine). 2 consecutive TSP type-1 domains span residues 324–379 (NGGW…AACP) and 398–499 (MARW…EQCQ). The helical transmembrane segment at 441–461 (LLGAPGVGMAALIAAAGVGAV) threads the bilayer. Over 462 to 1072 (GSPSEATGSS…IVETIGPLWI (611 aa)) the chain is Cytoplasmic. A ZU5 domain is found at 654 to 802 (SSTYEMLGSA…LGHFTVVAEP (149 aa)). Residues 980–1067 (LICGALDPPR…DVLDIIVETI (88 aa)) enclose the Death domain.

Belongs to the unc-5 family. Post-translationally, phosphorylated on different cytoplasmic tyrosine residues. As to expression, prior to gastrulation, it is strongly expressed in the presumptive mesoderm. Mesodermal expression begins to fade during stages 13-14, persisting only in the cells that form the dorsal vessel. Expressed within the CNS from late stage 13, shortly after the first axons have extended. Detected in several dispersed clusters of cells within the CNS, increasing in number as development proceeds. Also expressed in the peripheral and exit glia, which migrate laterally out of the CNS between stages 14 and 17. Strongly expressed in motor axons that exit the CNS ipsilaterally via the segmental nerve root (SN). Not expressed on either commissural or longitudinal axons within the CNS, nor on motor axons that exit via the intersegmental nerve (ISN). In the periphery, it is detected on all branches of the SN. Also expressed at high level in exit and peripheral glia along both the SN and ISN.

Its subcellular location is the membrane. In terms of biological role, receptor for netrin required for motor axon guidance. Mediates both short- and long-range axon motor repulsion in the developing nervous system upon ligand binding. Also involved in glial migration. While short-range repulsion requires both fra and unc-5, long-range repulsion only requires unc-5. In Drosophila melanogaster (Fruit fly), this protein is Netrin receptor unc-5 (unc-5).